The primary structure comprises 785 residues: Endonuclease MutS2 (785 aa).

334–341 (GPNTGGKT) is an ATP binding site. One can recognise a Smr domain in the interval 710–785 (LDLRGQRYDE…GNGATIVKLK (76 aa)).

This sequence belongs to the DNA mismatch repair MutS family. MutS2 subfamily. Homodimer. Binds to stalled ribosomes, contacting rRNA.

Endonuclease that is involved in the suppression of homologous recombination and thus may have a key role in the control of bacterial genetic diversity. Its function is as follows. Acts as a ribosome collision sensor, splitting the ribosome into its 2 subunits. Detects stalled/collided 70S ribosomes which it binds and splits by an ATP-hydrolysis driven conformational change. Acts upstream of the ribosome quality control system (RQC), a ribosome-associated complex that mediates the extraction of incompletely synthesized nascent chains from stalled ribosomes and their subsequent degradation. Probably generates substrates for RQC. The sequence is that of Endonuclease MutS2 from Lactobacillus helveticus (strain DPC 4571).